Consider the following 197-residue polypeptide: Small ribosomal subunit protein uS4 (197 aa).

One can recognise an S4 RNA-binding domain in the interval 87–147; it reads LRLDNVLFRL…EKSKSSARYK (61 aa).

The protein belongs to the universal ribosomal protein uS4 family. Part of the 30S ribosomal subunit. Contacts protein S5. The interaction surface between S4 and S5 is involved in control of translational fidelity.

Its function is as follows. One of the primary rRNA binding proteins, it binds directly to 16S rRNA where it nucleates assembly of the body of the 30S subunit. Functionally, with S5 and S12 plays an important role in translational accuracy. This Lachnospira eligens (strain ATCC 27750 / DSM 3376 / VPI C15-48 / C15-B4) (Eubacterium eligens) protein is Small ribosomal subunit protein uS4.